Consider the following 237-residue polypeptide: Proteasome subunit alpha type-5-B (237 aa).

Met1 carries the N-acetylmethionine modification. Residues Lys43, Lys66, and Lys185 each participate in a glycyl lysine isopeptide (Lys-Gly) (interchain with G-Cter in ubiquitin) cross-link.

Belongs to the peptidase T1A family. As to quaternary structure, component of the 20S core complex of the 26S proteasome. The 26S proteasome is composed of a core protease (CP), known as the 20S proteasome, capped at one or both ends by the 19S regulatory particle (RP/PA700). The 20S proteasome core is composed of 28 subunits that are arranged in four stacked rings, resulting in a barrel-shaped structure. The two end rings are each formed by seven alpha subunits, and the two central rings are each formed by seven beta subunits. The catalytic chamber with the active sites is on the inside of the barrel.

It is found in the cytoplasm. Its subcellular location is the nucleus. In terms of biological role, the proteasome is a multicatalytic proteinase complex which is characterized by its ability to cleave peptides with Arg, Phe, Tyr, Leu, and Glu adjacent to the leaving group at neutral or slightly basic pH. The proteasome has an ATP-dependent proteolytic activity. In Arabidopsis thaliana (Mouse-ear cress), this protein is Proteasome subunit alpha type-5-B (PAE2).